The chain runs to 554 residues: CTP synthase (554 aa).

Residues Met-1–Leu-265 form an amidoligase domain region. Residue Ser-13 coordinates CTP. Ser-13 lines the UTP pocket. Residues Ser-14–Ile-19 and Asp-71 each bind ATP. Mg(2+)-binding residues include Asp-71 and Glu-139. Residues Asp-146–Glu-148, Lys-186–Gln-191, and Lys-222 each bind CTP. Residues Lys-186–Gln-191 and Lys-222 each bind UTP. The 254-residue stretch at Thr-292–Gly-545 folds into the Glutamine amidotransferase type-1 domain. Gly-353 is an L-glutamine binding site. The active-site Nucleophile; for glutamine hydrolysis is Cys-380. L-glutamine-binding positions include Tyr-381–Gln-384, Glu-404, and Arg-471. Active-site residues include His-518 and Glu-520.

Belongs to the CTP synthase family. Homotetramer.

The enzyme catalyses UTP + L-glutamine + ATP + H2O = CTP + L-glutamate + ADP + phosphate + 2 H(+). It carries out the reaction L-glutamine + H2O = L-glutamate + NH4(+). The catalysed reaction is UTP + NH4(+) + ATP = CTP + ADP + phosphate + 2 H(+). It participates in pyrimidine metabolism; CTP biosynthesis via de novo pathway; CTP from UDP: step 2/2. Its activity is regulated as follows. Allosterically activated by GTP, when glutamine is the substrate; GTP has no effect on the reaction when ammonia is the substrate. The allosteric effector GTP functions by stabilizing the protein conformation that binds the tetrahedral intermediate(s) formed during glutamine hydrolysis. Inhibited by the product CTP, via allosteric rather than competitive inhibition. In terms of biological role, catalyzes the ATP-dependent amination of UTP to CTP with either L-glutamine or ammonia as the source of nitrogen. Regulates intracellular CTP levels through interactions with the four ribonucleotide triphosphates. The chain is CTP synthase from Xanthomonas oryzae pv. oryzae (strain MAFF 311018).